A 24-amino-acid polypeptide reads, in one-letter code: Brevinin-1Ra (24 aa).

Residues C18 and C24 are joined by a disulfide bond.

In terms of tissue distribution, expressed by the skin glands.

It localises to the secreted. Its function is as follows. Antimicrobial peptide. This Pelophylax ridibundus (Marsh frog) protein is Brevinin-1Ra.